A 118-amino-acid chain; its full sequence is REPTOR-binding partner (118 aa).

The span at 1–20 (MADMEIQSNKMSITEETQVQ) shows a compositional bias: polar residues. Residues 1-53 (MADMEIQSNKMSITEETQVQTRKECGKRGRKPGRKTSTEKLDMKAKLERSRQS) are disordered. Basic and acidic residues predominate over residues 36-53 (TSTEKLDMKAKLERSRQS). The interval 40–77 (KLDMKAKLERSRQSARECRARKKLRYQYLEELVADREK) is basic motif. The bZIP domain maps to 40-90 (KLDMKAKLERSRQSARECRARKKLRYQYLEELVADREKAVVALRTELERLI). Residues 82 to 89 (LRTELERL) are leucine-zipper.

The protein belongs to the bZIP family. ATF subfamily. As to quaternary structure, homodimer. Interacts (via C-terminus) with REPTOR (via C-terminus).

The protein resides in the nucleus. Its subcellular location is the chromosome. In terms of biological role, transcriptional regulator that acts in the TORC1 signaling pathway to regulate energy homeostasis and promote survival during nutrient deprivation. Interacts with REPTOR to form a transcriptional activator complex that functions downstream of TORC1 to up-regulate the expression of most target genes induced by TORC1 inhibition. In the complex, acts to enhance the binding of the transcriptional activator REPTOR to the regulatory sequences of target genes. Under normal conditions TORC1 is active, inhibiting the formation of the REPTOR/REPTOR-BP complex by phosphorylating REPTOR and mediates its cytoplasmic retention by forming a docking site for 14-3-3 proteins. Upon TORC1 inhibition resulting from nutrient stress, REPTOR is recruited into the nucleus where it interacts with REPTOR-BP and together they maintain organismal metabolism by activating the expression of target stress response genes including those involved in glycogenesis and triglyceride biosynthesis. The complex also appears to negatively regulate some aspects of TORC1-dependent larval growth. The sequence is that of REPTOR-binding partner from Drosophila melanogaster (Fruit fly).